The following is a 385-amino-acid chain: UPF0744 protein YSC83 (385 aa).

This sequence belongs to the UPF0744 family.

Its subcellular location is the mitochondrion outer membrane. This is UPF0744 protein YSC83 (YSC83) from Saccharomyces cerevisiae (strain ATCC 204508 / S288c) (Baker's yeast).